Here is a 410-residue protein sequence, read N- to C-terminus: Pectate lyase PEL9 (410 aa).

The N-terminal stretch at 1 to 18 is a signal peptide; it reads MMGKSVWVFAALFPAVLA. Ca(2+) is bound by residues Asp-191, Asp-215, Asp-216, and Asp-219. Residue Asn-234 is glycosylated (N-linked (GlcNAc...) asparagine). Residue Lys-271 is the Proton acceptor of the active site. The span at 342-351 shows a compositional bias: polar residues; that stretch reads GEAPTSLSDE. Disordered stretches follow at residues 342 to 361 and 381 to 410; these read GEAP…SWDG and ERNA…DWSA.

Belongs to the polysaccharide lyase 9 family. Requires Ca(2+) as cofactor.

The protein localises to the secreted. It catalyses the reaction Eliminative cleavage of (1-&gt;4)-alpha-D-galacturonan to give oligosaccharides with 4-deoxy-alpha-D-galact-4-enuronosyl groups at their non-reducing ends.. With respect to regulation, inhibited by iron ions. Activated in presence of the surfactant polysorbate 20, while inhibited in the presence of Triton X-100 and sodium dodecyl sulfate. Inhibited in presence of the organic solvents methanol, ethanol, propan-2-ol and acetone. In terms of biological role, presents an endo-cleaving activity on the homogalacturonan (HG) region in pectin. Active on homogalacturonan with a degree of polymerization above 4, and does not appear to be affected by the degree of methylation of the substrate. Does not degrade linear rhamnogalacturonan. This chain is Pectate lyase PEL9, found in Emericella nidulans (strain FGSC A4 / ATCC 38163 / CBS 112.46 / NRRL 194 / M139) (Aspergillus nidulans).